Reading from the N-terminus, the 301-residue chain is Probable alpha-L-glutamate ligase (301 aa).

Residues 104-287 (LQFLSRKGID…IAGMIIEFIE (184 aa)) form the ATP-grasp domain. Residues K141, 178-179 (EF), D187, and 211-213 (RSN) contribute to the ATP site. 3 residues coordinate Mg(2+): D248, E260, and N262. Mn(2+)-binding residues include D248, E260, and N262.

This sequence belongs to the RimK family. Mg(2+) serves as cofactor. It depends on Mn(2+) as a cofactor.

The protein is Probable alpha-L-glutamate ligase of Coxiella burnetii (strain CbuK_Q154) (Coxiella burnetii (strain Q154)).